Here is a 617-residue protein sequence, read N- to C-terminus: Chaperone protein HscA homolog (617 aa).

It belongs to the heat shock protein 70 family.

Its function is as follows. Chaperone involved in the maturation of iron-sulfur cluster-containing proteins. Has a low intrinsic ATPase activity which is markedly stimulated by HscB. The sequence is that of Chaperone protein HscA homolog from Photobacterium profundum (strain SS9).